Consider the following 390-residue polypeptide: Chorismate synthase 2 (390 aa).

Residues arginine 39 and arginine 45 each contribute to the NADP(+) site. FMN-binding positions include 132 to 134 (RSS), 253 to 254 (NA), glycine 298, 313 to 317 (KPIPT), and arginine 339.

The protein belongs to the chorismate synthase family. As to quaternary structure, homotetramer. FMNH2 serves as cofactor.

The catalysed reaction is 5-O-(1-carboxyvinyl)-3-phosphoshikimate = chorismate + phosphate. It functions in the pathway metabolic intermediate biosynthesis; chorismate biosynthesis; chorismate from D-erythrose 4-phosphate and phosphoenolpyruvate: step 7/7. Its function is as follows. Catalyzes the anti-1,4-elimination of the C-3 phosphate and the C-6 proR hydrogen from 5-enolpyruvylshikimate-3-phosphate (EPSP) to yield chorismate, which is the branch point compound that serves as the starting substrate for the three terminal pathways of aromatic amino acid biosynthesis. This reaction introduces a second double bond into the aromatic ring system. The protein is Chorismate synthase 2 of Bacillus thuringiensis subsp. konkukian (strain 97-27).